We begin with the raw amino-acid sequence, 316 residues long: Ribosomal RNA large subunit methyltransferase F (316 aa).

This sequence belongs to the methyltransferase superfamily. METTL16/RlmF family.

The protein localises to the cytoplasm. The catalysed reaction is adenosine(1618) in 23S rRNA + S-adenosyl-L-methionine = N(6)-methyladenosine(1618) in 23S rRNA + S-adenosyl-L-homocysteine + H(+). In terms of biological role, specifically methylates the adenine in position 1618 of 23S rRNA. This is Ribosomal RNA large subunit methyltransferase F from Pseudomonas putida (strain W619).